The primary structure comprises 95 residues: Aspartyl/glutamyl-tRNA(Asn/Gln) amidotransferase subunit C (95 aa).

Belongs to the GatC family. As to quaternary structure, heterotrimer of A, B and C subunits.

The enzyme catalyses L-glutamyl-tRNA(Gln) + L-glutamine + ATP + H2O = L-glutaminyl-tRNA(Gln) + L-glutamate + ADP + phosphate + H(+). It catalyses the reaction L-aspartyl-tRNA(Asn) + L-glutamine + ATP + H2O = L-asparaginyl-tRNA(Asn) + L-glutamate + ADP + phosphate + 2 H(+). Allows the formation of correctly charged Asn-tRNA(Asn) or Gln-tRNA(Gln) through the transamidation of misacylated Asp-tRNA(Asn) or Glu-tRNA(Gln) in organisms which lack either or both of asparaginyl-tRNA or glutaminyl-tRNA synthetases. The reaction takes place in the presence of glutamine and ATP through an activated phospho-Asp-tRNA(Asn) or phospho-Glu-tRNA(Gln). This is Aspartyl/glutamyl-tRNA(Asn/Gln) amidotransferase subunit C from Marinobacter nauticus (strain ATCC 700491 / DSM 11845 / VT8) (Marinobacter aquaeolei).